Here is a 102-residue protein sequence, read N- to C-terminus: MANQKIRIRLRAYDHELIDQSAQKIVEAAKRTDVKVSGPIPLPTEKEVITILRAVHKYKDSREQFEQRTHKRLIDIINPNAKTLEALKKLNLPAGVDIEIKL.

It belongs to the universal ribosomal protein uS10 family. In terms of assembly, part of the 30S ribosomal subunit.

Involved in the binding of tRNA to the ribosomes. The chain is Small ribosomal subunit protein uS10 from Finegoldia magna (strain ATCC 29328 / DSM 20472 / WAL 2508) (Peptostreptococcus magnus).